Reading from the N-terminus, the 351-residue chain is UDP-3-O-acylglucosamine N-acyltransferase (351 aa).

Histidine 240 functions as the Proton acceptor in the catalytic mechanism.

It belongs to the transferase hexapeptide repeat family. LpxD subfamily. Homotrimer.

The catalysed reaction is a UDP-3-O-[(3R)-3-hydroxyacyl]-alpha-D-glucosamine + a (3R)-hydroxyacyl-[ACP] = a UDP-2-N,3-O-bis[(3R)-3-hydroxyacyl]-alpha-D-glucosamine + holo-[ACP] + H(+). It functions in the pathway bacterial outer membrane biogenesis; LPS lipid A biosynthesis. Catalyzes the N-acylation of UDP-3-O-acylglucosamine using 3-hydroxyacyl-ACP as the acyl donor. Is involved in the biosynthesis of lipid A, a phosphorylated glycolipid that anchors the lipopolysaccharide to the outer membrane of the cell. This Pseudomonas entomophila (strain L48) protein is UDP-3-O-acylglucosamine N-acyltransferase.